The sequence spans 141 residues: Hemoglobin subunit alpha (141 aa).

Positions valine 1 to arginine 141 constitute a Globin domain. A Phosphoserine modification is found at serine 3. Position 7 is an N6-succinyllysine (lysine 7). Threonine 8 is subject to Phosphothreonine. Lysine 11 bears the N6-succinyllysine mark. Lysine 16 carries the N6-acetyllysine; alternate modification. Residue lysine 16 is modified to N6-succinyllysine; alternate. Residue tyrosine 24 is modified to Phosphotyrosine. A Phosphoserine modification is found at serine 35. Position 40 is an N6-succinyllysine (lysine 40). Residue serine 49 is modified to Phosphoserine. Histidine 58 is an O2 binding site. Residue histidine 87 coordinates heme b. At serine 102 the chain carries Phosphoserine. Residue threonine 108 is modified to Phosphothreonine. 2 positions are modified to phosphoserine: serine 124 and serine 131. Residues threonine 134 and threonine 137 each carry the phosphothreonine modification. Position 138 is a phosphoserine (serine 138).

This sequence belongs to the globin family. Heterotetramer of two alpha chains and two beta chains. Red blood cells.

In terms of biological role, involved in oxygen transport from the lung to the various peripheral tissues. Functionally, hemopressin acts as an antagonist peptide of the cannabinoid receptor CNR1. Hemopressin-binding efficiently blocks cannabinoid receptor CNR1 and subsequent signaling. The protein is Hemoglobin subunit alpha (HBA) of Cebus capucinus (White-faced sapajou).